Here is a 180-residue protein sequence, read N- to C-terminus: Required for excision 1-B domain-containing protein (180 aa).

A disordered region spans residues 1–23 (MITAEAASESTVPAVPGDTAATG).

This is Required for excision 1-B domain-containing protein from Bos taurus (Bovine).